We begin with the raw amino-acid sequence, 527 residues long: Succinate-semialdehyde dehydrogenase, mitochondrial (527 aa).

A mitochondrion-targeting transit peptide spans 1–35 (MAMAMAMRRAAALGARHILAASSTSSSGVLLRRHM). Residues R208, 223–226 (KPSE), and 276–281 (GSTAVG) each bind NAD(+). A substrate-binding site is contributed by R208. The active-site Proton acceptor is the E298. R326, C332, and S489 together coordinate substrate. Residue C332 is the Nucleophile of the active site. A disulfide bridge links C332 with C334.

Belongs to the aldehyde dehydrogenase family. In terms of assembly, homotetramer.

The protein resides in the mitochondrion matrix. It carries out the reaction succinate semialdehyde + NAD(+) + H2O = succinate + NADH + 2 H(+). It participates in amino-acid degradation; 4-aminobutanoate degradation. Redox-regulated. Inhibited under oxydizing conditions. In terms of biological role, oxidizes specifically succinate semialdehyde. Involved in plant response to environmental stress by preventing the accumulation of reactive oxygen species. The protein is Succinate-semialdehyde dehydrogenase, mitochondrial (ALDH5F1) of Oryza sativa subsp. japonica (Rice).